The primary structure comprises 483 residues: Regulatory protein ViaA (483 aa).

It belongs to the ViaA family. As to quaternary structure, homodimer. Interacts with RavA.

The protein resides in the cytoplasm. Component of the RavA-ViaA chaperone complex, which may act on the membrane to optimize the function of some of the respiratory chains. ViaA stimulates the ATPase activity of RavA. The polypeptide is Regulatory protein ViaA (Salmonella agona (strain SL483)).